Reading from the N-terminus, the 178-residue chain is Large ribosomal subunit protein uL6 (178 aa).

Belongs to the universal ribosomal protein uL6 family. In terms of assembly, part of the 50S ribosomal subunit.

This protein binds to the 23S rRNA, and is important in its secondary structure. It is located near the subunit interface in the base of the L7/L12 stalk, and near the tRNA binding site of the peptidyltransferase center. In Corynebacterium glutamicum (strain R), this protein is Large ribosomal subunit protein uL6.